The following is a 232-amino-acid chain: Probable phospholipid hydroperoxide glutathione peroxidase 6, mitochondrial (232 aa).

Residues 1 to 54 constitute a mitochondrion transit peptide; that stretch reads MLRSSIRLLYIRRTSPLLRSLSSSSSSSSSKRFDSAKPLFNSHRIISLPISTTG. Cysteine 105 is an active-site residue.

Belongs to the glutathione peroxidase family. As to expression, expressed at a low but detectable level in leaves, stems, and flowers, but at a higher level in siliques and even higher in roots. Predominantly expressed in seeds.

The protein resides in the mitochondrion. The enzyme catalyses a hydroperoxy polyunsaturated fatty acid + 2 glutathione = a hydroxy polyunsaturated fatty acid + glutathione disulfide + H2O. Its function is as follows. Protects cells and enzymes from oxidative damage, by catalyzing the reduction of hydrogen peroxide, lipid peroxides and organic hydroperoxide, by glutathione. In Arabidopsis thaliana (Mouse-ear cress), this protein is Probable phospholipid hydroperoxide glutathione peroxidase 6, mitochondrial (GPX6).